Reading from the N-terminus, the 610-residue chain is Glutamine--fructose-6-phosphate aminotransferase [isomerizing] (610 aa).

Cysteine 2 functions as the Nucleophile; for GATase activity in the catalytic mechanism. The 217-residue stretch at 2 to 218 (CGIVGAVAQR…EGDVAEITRR (217 aa)) folds into the Glutamine amidotransferase type-2 domain. 2 consecutive SIS domains span residues 286–426 (AADI…EQGR) and 459–600 (LATD…VDQP). The active-site For Fru-6P isomerization activity is the lysine 605.

Homodimer.

The protein resides in the cytoplasm. The enzyme catalyses D-fructose 6-phosphate + L-glutamine = D-glucosamine 6-phosphate + L-glutamate. Its function is as follows. Catalyzes the first step in hexosamine metabolism, converting fructose-6P into glucosamine-6P using glutamine as a nitrogen source. The polypeptide is Glutamine--fructose-6-phosphate aminotransferase [isomerizing] (Vibrio parahaemolyticus serotype O3:K6 (strain RIMD 2210633)).